The sequence spans 310 residues: uncharacterized protein (310 aa).

Topologically, residues 1-6 (MISEKA) are cytoplasmic. The PQ-loop 1 domain maps to 5–69 (KAATALATIA…SKGNVILQVQ (65 aa)). The chain crosses the membrane as a helical span at residues 7 to 27 (ATALATIATVCWCVQLIPQII). Over 28–36 (YNWKKKDCT) the chain is Extracellular. The chain crosses the membrane as a helical span at residues 37-57 (GLPPLMMFLWVVSGIPFAIYF). At 58–61 (CVSK) the chain is on the cytoplasmic side. Residues 62–82 (GNVILQVQPHLFMFFCSISFV) traverse the membrane as a helical segment. Over 83–96 (QSCYYPPISMARSK) the chain is Extracellular. The chain crosses the membrane as a helical span at residues 97 to 117 (IVMIVAAIIAADVGMEVGFIL). The Cytoplasmic segment spans residues 118–131 (WLRPLYEKGVKWPD). Residues 132-152 (LIFGISASVLLAVGLLPPYFE) traverse the membrane as a helical segment. The PQ-loop 2 domain maps to 138–194 (ASVLLAVGLLPPYFELAKRKGRVIGINFAFLFIDSLGAWLSIISVILGNMDIMGIIL). The Extracellular segment spans residues 153–164 (LAKRKGRVIGIN). Residues 165–185 (FAFLFIDSLGAWLSIISVILG) traverse the membrane as a helical segment. The Cytoplasmic segment spans residues 186–191 (NMDIMG). Residues 192–212 (IILYSIVAGMELGIFASHFIW) form a helical membrane-spanning segment. The Extracellular segment spans residues 213-310 (WCRFRFLAKG…DPDRYSRLSV (98 aa)). Ser-229 bears the Phosphoserine mark. N-linked (GlcNAc...) asparagine glycans are attached at residues Asn-251 and Asn-259.

It is found in the cell membrane. This is an uncharacterized protein from Saccharomyces cerevisiae (strain ATCC 204508 / S288c) (Baker's yeast).